A 236-amino-acid chain; its full sequence is MADDWESAADSDVVIRPTAAASVNKWEGEDEDEDIKDSWEDEEEKKDEEKPTKTEAPAKPKPNKALKAKLEQQALREEEAEAERLANLSPAEKLAEKLRLQKIQEASDLKHAQEAFGVTSTCGGLDAFNPETKEEFKEFGATLSWKVAQFRESEHFPQFVEDLVRSLCVNLSAADIKKVKMNVEVLHSEKLKLEKANAKKPAGKGKGKVTLRTENDDIDGYQKYGNDFTEDYDDFM.

The tract at residues 1–84 is disordered; the sequence is MADDWESAAD…LREEEAEAER (84 aa). Positions 28–46 are enriched in acidic residues; the sequence is GEDEDEDIKDSWEDEEEKK. Basic and acidic residues-rich tracts occupy residues 47–58 and 68–77; these read DEEKPTKTEAPA and AKLEQQALRE.

The protein belongs to the eIF-3 subunit J family. Component of the eukaryotic translation initiation factor 3 (eIF-3) complex. The eIF-3 complex interacts with pix.

Its subcellular location is the cytoplasm. Functionally, component of the eukaryotic translation initiation factor 3 (eIF-3) complex, which is involved in protein synthesis of a specialized repertoire of mRNAs and, together with other initiation factors, stimulates binding of mRNA and methionyl-tRNAi to the 40S ribosome. The eIF-3 complex specifically targets and initiates translation of a subset of mRNAs involved in cell proliferation. This Drosophila sechellia (Fruit fly) protein is Eukaryotic translation initiation factor 3 subunit J.